The chain runs to 331 residues: 6-phosphogluconolactonase (331 aa).

This sequence belongs to the cycloisomerase 2 family.

It carries out the reaction 6-phospho-D-glucono-1,5-lactone + H2O = 6-phospho-D-gluconate + H(+). It functions in the pathway carbohydrate degradation; pentose phosphate pathway; D-ribulose 5-phosphate from D-glucose 6-phosphate (oxidative stage): step 2/3. Functionally, catalyzes the hydrolysis of 6-phosphogluconolactone to 6-phosphogluconate. The polypeptide is 6-phosphogluconolactonase (Citrobacter koseri (strain ATCC BAA-895 / CDC 4225-83 / SGSC4696)).